The primary structure comprises 477 residues: FAD-dependent monooxygenase paxM (477 aa).

Residues 4–24 form a helical membrane-spanning segment; that stretch reads AEFQVIIVGGSIGGLTLAHCL. Residues E35, G49, and R108 each coordinate FAD. R195 is a catalytic residue. 2 residues coordinate FAD: D308 and A321. The helical transmembrane segment at 446-466 threads the bilayer; the sequence is LMIYLFGLTIVYTSLTMMFDL.

It belongs to the paxM FAD-dependent monooxygenase family. FAD is required as a cofactor.

Its subcellular location is the membrane. The protein operates within secondary metabolite biosynthesis. FAD-dependent monooxygenase; part of the gene cluster that mediates the biosynthesis of paxilline, a mycotoxin that acts as an inhibitor of mammalian maxi-K channels. PaxG, the geranylgeranyl diphosphate (GGPP) synthase is proposed to catalyze the first step in paxilline biosynthesis. Condensation of indole-3-glycerol phosphate with GGPP by paxC then forms 3-geranylgeranylindole (3-GGI), followed by epoxidation and cyclization of this intermediate (by paxM and paxB) to form paspaline. Paspaline is subsequently converted to 13-desoxypaxilline by paxP, the latter being then converted to paxilline by paxQ. Finally paxilline can be mono- and di-prenylated by paxD. The polypeptide is FAD-dependent monooxygenase paxM (Penicillium paxilli).